A 365-amino-acid polypeptide reads, in one-letter code: Chorismate synthase (365 aa).

NADP(+) contacts are provided by Arg-48 and Arg-54. FMN-binding positions include 125–127 (RSS), 237–238 (NA), Gly-277, 292–296 (KPTSS), and Arg-318.

This sequence belongs to the chorismate synthase family. As to quaternary structure, homotetramer. FMNH2 is required as a cofactor.

It carries out the reaction 5-O-(1-carboxyvinyl)-3-phosphoshikimate = chorismate + phosphate. The protein operates within metabolic intermediate biosynthesis; chorismate biosynthesis; chorismate from D-erythrose 4-phosphate and phosphoenolpyruvate: step 7/7. Catalyzes the anti-1,4-elimination of the C-3 phosphate and the C-6 proR hydrogen from 5-enolpyruvylshikimate-3-phosphate (EPSP) to yield chorismate, which is the branch point compound that serves as the starting substrate for the three terminal pathways of aromatic amino acid biosynthesis. This reaction introduces a second double bond into the aromatic ring system. The sequence is that of Chorismate synthase from Verminephrobacter eiseniae (strain EF01-2).